The sequence spans 105 residues: Thioredoxin (105 aa).

The Thioredoxin domain occupies 1–105 (MANNVMDSSF…SLLDWINKSI (105 aa)). A disulfide bond links Cys-30 and Cys-33.

The protein belongs to the thioredoxin family.

Component of the thioredoxin-thioredoxin reductase system. Participates in various redox reactions through the reversible oxidation of its active center dithiol to a disulfide and catalyzes dithiol-disulfide exchange reactions. In Rickettsia conorii (strain ATCC VR-613 / Malish 7), this protein is Thioredoxin (trxA).